A 176-amino-acid chain; its full sequence is Interleukin-19 (176 aa).

The N-terminal stretch at 1-24 is a signal peptide; the sequence is MKTQCASTWLLGMTLILCSVHIYS. 3 disulfide bridges follow: Cys28/Cys120, Cys74/Cys126, and Cys75/Cys128. Residue Asn56 is glycosylated (N-linked (GlcNAc...) asparagine). 2 N-linked (GlcNAc...) asparagine glycosylation sites follow: Asn127 and Asn134.

This sequence belongs to the IL-10 family.

It localises to the secreted. Functionally, cytokine that functions as an anti-inflammatory and proangiogenic factor. Polarizes adaptive immunity to an anti-inflammatory phenotype through induction of T-helper 2 responses by both down-regulation of IFN-gamma and up-regulation of IL4 and IL5. Produced by osteocytes, stimulates granulopoiesis and neutrophil formation. Exerts its biological effect through a receptor complex consisting of a heterodimer of IL20RA and IL20RB. In turn, activates the Janus kinase (JAK) and signal transducer and activator of transcription (STAT) pathway, and importantly, STAT3. The sequence is that of Interleukin-19 (Il19) from Mus musculus (Mouse).